The primary structure comprises 331 residues: Flavonol synthase 1 (331 aa).

A Fe2OG dioxygenase domain is found at 191 to 292 (DAIELLLKIN…RMSWPVFCSP (102 aa)). The Fe cation site is built by His-217, Asp-219, and His-273. Arg-283 contacts 2-oxoglutarate.

It belongs to the iron/ascorbate-dependent oxidoreductase family. It depends on L-ascorbate as a cofactor. Fe(2+) serves as cofactor. As to expression, expressed in young cromes.

The enzyme catalyses a (2R,3R)-dihydroflavonol + 2-oxoglutarate + O2 = a flavonol + succinate + CO2 + H2O. It carries out the reaction (2R,3R)-dihydrokaempferol + 2-oxoglutarate + O2 = kaempferol + succinate + CO2 + H2O + H(+). The catalysed reaction is (2R,3R)-dihydroquercetin + 2-oxoglutarate + O2 = quercetin + succinate + CO2 + H2O + H(+). It catalyses the reaction (2R,3R)-dihydromyricetin + 2-oxoglutarate + O2 = myricetin + succinate + CO2 + H2O + H(+). Its pathway is flavonoid metabolism. In terms of biological role, catalyzes the formation of flavonols from dihydroflavonols. Can act on dihydrokaempferol to produce kaempferol, on dihydroquercetin to produce quercitin and on dihydromyricetin to produce myricetin. This Crocosmia x crocosmiiflora (Montbretia) protein is Flavonol synthase 1.